We begin with the raw amino-acid sequence, 85 residues long: Large ribosomal subunit protein bL27 (85 aa).

The segment at 1 to 21 is disordered; that stretch reads MAHKKGVGSSKNGRESESKRL.

This sequence belongs to the bacterial ribosomal protein bL27 family.

The polypeptide is Large ribosomal subunit protein bL27 (Porphyromonas gingivalis (strain ATCC 33277 / DSM 20709 / CIP 103683 / JCM 12257 / NCTC 11834 / 2561)).